Consider the following 449-residue polypeptide: Glutamate--tRNA ligase (449 aa).

Residues 10 to 20 carry the 'HIGH' region motif; the sequence is PSPTGFLHIGN. The 'KMSKS' region motif lies at 214 to 218; the sequence is KLSKR. Lys-217 provides a ligand contact to ATP.

This sequence belongs to the class-I aminoacyl-tRNA synthetase family. Glutamate--tRNA ligase type 1 subfamily. Monomer.

The protein resides in the cytoplasm. It catalyses the reaction tRNA(Glu) + L-glutamate + ATP = L-glutamyl-tRNA(Glu) + AMP + diphosphate. Catalyzes the attachment of glutamate to tRNA(Glu) in a two-step reaction: glutamate is first activated by ATP to form Glu-AMP and then transferred to the acceptor end of tRNA(Glu). This chain is Glutamate--tRNA ligase, found in Onion yellows phytoplasma (strain OY-M).